The chain runs to 454 residues: Tyrosine aminotransferase (454 aa).

M1 is modified (N-acetylmethionine). At K280 the chain carries N6-(pyridoxal phosphate)lysine. At S448 the chain carries Phosphoserine.

Belongs to the class-I pyridoxal-phosphate-dependent aminotransferase family. Homodimer. Pyridoxal 5'-phosphate serves as cofactor.

The enzyme catalyses L-tyrosine + 2-oxoglutarate = 3-(4-hydroxyphenyl)pyruvate + L-glutamate. It participates in amino-acid degradation; L-phenylalanine degradation; acetoacetate and fumarate from L-phenylalanine: step 2/6. In terms of biological role, transaminase involved in tyrosine breakdown. Converts tyrosine to p-hydroxyphenylpyruvate. Can catalyze the reverse reaction, using glutamic acid, with 2-oxoglutarate as cosubstrate (in vitro). Has much lower affinity and transaminase activity towards phenylalanine. This Homo sapiens (Human) protein is Tyrosine aminotransferase (TAT).